The chain runs to 526 residues: Probable Xaa-Pro aminopeptidase GLRG_02280 (526 aa).

Mn(2+) is bound by residues Asp285, Asp296, Glu454, and Glu495.

It belongs to the peptidase M24B family. It depends on Mn(2+) as a cofactor.

The catalysed reaction is Release of any N-terminal amino acid, including proline, that is linked to proline, even from a dipeptide or tripeptide.. Catalyzes the removal of a penultimate prolyl residue from the N-termini of peptides. The protein is Probable Xaa-Pro aminopeptidase GLRG_02280 of Colletotrichum graminicola (strain M1.001 / M2 / FGSC 10212) (Maize anthracnose fungus).